The sequence spans 430 residues: MLDKSEAIIEAIDAREILDSRGRPTVEAEVRLESGAVGLAQVPSGASTGSFEAHELRDGDKARYGGNGVLKAVRNAKEKIAPELIGKDALDQTTVDYAMIARDGSDNKSNLGANAILAVSLAAAKAAAAELALPLYRYLGGPLANVLPVPLMNVINGGAHAANNVDFQEFMIVPVGASSFKEALRWGAEVFTALSKVLDSKGLLTGVGDEGGFAPNLGSNEEALEILVDSIKAAGYEPGTQVALALDIAASEFYADGQYTYDGTAHSPAEFIDYLTAMVEKYPIVSIEDGLHEDDWDSWTILTARIGHRVQLVGDDLFVTNKVRLQQGIEKKAGNAVLIKLNQIGTLTETLETIDLATRNGYQSVISHRSGETEDTTIADLAVATRAGQIKTGSLCRSERVAKYNRLLRIEDELGDRAVYAPKVGLGPQF.

Residue Gln-168 coordinates (2R)-2-phosphoglycerate. The active-site Proton donor is the Glu-210. Mg(2+)-binding residues include Asp-247, Glu-288, and Asp-315. The (2R)-2-phosphoglycerate site is built by Lys-340, Arg-369, Ser-370, and Lys-391. Lys-340 serves as the catalytic Proton acceptor.

The protein belongs to the enolase family. Mg(2+) serves as cofactor.

The protein resides in the cytoplasm. Its subcellular location is the secreted. It localises to the cell surface. It carries out the reaction (2R)-2-phosphoglycerate = phosphoenolpyruvate + H2O. The protein operates within carbohydrate degradation; glycolysis; pyruvate from D-glyceraldehyde 3-phosphate: step 4/5. Functionally, catalyzes the reversible conversion of 2-phosphoglycerate (2-PG) into phosphoenolpyruvate (PEP). It is essential for the degradation of carbohydrates via glycolysis. This chain is Enolase, found in Picosynechococcus sp. (strain ATCC 27264 / PCC 7002 / PR-6) (Agmenellum quadruplicatum).